The following is a 626-amino-acid chain: E3 ubiquitin-protein ligase HRD1 (626 aa).

The signal sequence occupies residues 1-15 (MQLLLSSVCMALTSA). Topologically, residues 16 to 38 (VIGFAYYQKQQFYPAVVYITKSN) are lumenal. The helical transmembrane segment at 39-59 (ASMGVIYIQFFVIVFMFGKLL) threads the bilayer. The Cytoplasmic portion of the chain corresponds to 60–96 (SKIFLGTLRAAEFEHLLERFWYALTETCLAFTVFRDD). Residues 97 to 117 (FNPRFVALFTVLLFLKSFHWL) form a helical membrane-spanning segment. Over 118–128 (AEERVDFMERS) the chain is Lumenal. The chain crosses the membrane as a helical span at residues 129 to 149 (PVLGWLFHIRVGSLLTVLGIL). The Cytoplasmic portion of the chain corresponds to 150–167 (DYVLLIHAYNSTLVRGPT). Residues 168–188 (VQLVFGFEYAILLTVIASTAI) form a helical membrane-spanning segment. Topologically, residues 189-222 (KYVLHAAEMRTDTPWENKAVFLLYTELVIGLIKV) are lumenal. A helical membrane pass occupies residues 223-243 (VLYILFVVIMAKIYALPMFVF). The tract at residues 234-268 (KIYALPMFVFRPMFFTIRNFRKALNDVIMSRRAIR) is interaction with p53/TP53. Over 244–626 (RPMFFTIRNF…AATNERTTAE (383 aa)) the chain is Cytoplasmic. The RING-type; atypical zinc finger occupies 289 to 328 (CIICREDMVNHSKKLPCGHIFHTTCLRSWFQRQQTCPTCR). A disordered region spans residues 569–600 (DADEDDIPSTATEAVSIPNSDADFEENSSELG). Positions 577–587 (STATEAVSIPN) are enriched in polar residues.

It belongs to the HRD1 family. As to quaternary structure, homodimer. Interacts with p53. May interact with Septin2.

Its subcellular location is the endoplasmic reticulum membrane. It carries out the reaction S-ubiquitinyl-[E2 ubiquitin-conjugating enzyme]-L-cysteine + [acceptor protein]-L-lysine = [E2 ubiquitin-conjugating enzyme]-L-cysteine + N(6)-ubiquitinyl-[acceptor protein]-L-lysine.. Its pathway is protein modification; protein ubiquitination. Its function is as follows. Acts as an E3 ubiquitin-protein ligase which accepts ubiquitin specifically from endoplasmic reticulum-associated UBC7 E2 ligase and transfers it to substrates, promoting their degradation. Component of the endoplasmic reticulum quality control (ERQC) system also called ER-associated degradation (ERAD) involved in ubiquitin-dependent degradation of misfolded endoplasmic reticulum proteins. Also promotes the degradation of normal but naturally short-lived proteins. Protects cells from ER stress-induced apoptosis. Sequesters p53 in the cytoplasm and promotes its degradation, thereby negatively regulating its biological function in transcription, cell cycle regulation and apoptosis. The chain is E3 ubiquitin-protein ligase HRD1 (sip3) from Drosophila melanogaster (Fruit fly).